Reading from the N-terminus, the 437-residue chain is Type II methyltransferase M.HgiBI (437 aa).

The region spanning 4–431 (FRFIDLFAGI…KALQCVKLFE (428 aa)) is the SAM-dependent MTase C5-type domain. Cysteine 75 is an active-site residue.

Belongs to the class I-like SAM-binding methyltransferase superfamily. C5-methyltransferase family.

The enzyme catalyses a 2'-deoxycytidine in DNA + S-adenosyl-L-methionine = a 5-methyl-2'-deoxycytidine in DNA + S-adenosyl-L-homocysteine + H(+). Functionally, a methylase that recognizes the double-stranded sequence 5'-GGWCC-3', methylates C-? on both strands, and protects the DNA from cleavage by the HgiBI endonuclease. This system is less active than isoschizomeric RM.HgiEI. This is Type II methyltransferase M.HgiBI from Herpetosiphon aurantiacus (Herpetosiphon giganteus).